The following is a 132-amino-acid chain: D-ribose pyranase (132 aa).

Histidine 20 acts as the Proton donor in catalysis. Substrate-binding positions include aspartate 28, histidine 99, and 121–123 (YSN).

It belongs to the RbsD / FucU family. RbsD subfamily. As to quaternary structure, homodecamer.

It is found in the cytoplasm. It carries out the reaction beta-D-ribopyranose = beta-D-ribofuranose. Its pathway is carbohydrate metabolism; D-ribose degradation; D-ribose 5-phosphate from beta-D-ribopyranose: step 1/2. In terms of biological role, catalyzes the interconversion of beta-pyran and beta-furan forms of D-ribose. The polypeptide is D-ribose pyranase (Pseudomonas putida (strain ATCC 47054 / DSM 6125 / CFBP 8728 / NCIMB 11950 / KT2440)).